A 290-amino-acid chain; its full sequence is uncharacterized protein (290 aa).

Disordered stretches follow at residues 1-98 and 209-236; these read MLGQ…SRRV and LSGQ…AATT. Over residues 63 to 76 the composition is skewed to basic and acidic residues; sequence KPDRVRPGQRDRIG. Over residues 87 to 97 the composition is skewed to low complexity; sequence AGQARAASSRR. A helical transmembrane segment spans residues 261–281; it reads CILTALLAVSFHSIGVVIMTS.

The protein localises to the membrane. This is an uncharacterized protein from Homo sapiens (Human).